Reading from the N-terminus, the 252-residue chain is Phosphoglycolate phosphatase (252 aa).

D13 serves as the catalytic Nucleophile. Mg(2+)-binding residues include D13, D15, and D192.

It belongs to the HAD-like hydrolase superfamily. CbbY/CbbZ/Gph/YieH family. As to quaternary structure, monomer. Mg(2+) serves as cofactor. Chloride is required as a cofactor.

It catalyses the reaction 2-phosphoglycolate + H2O = glycolate + phosphate. It participates in organic acid metabolism; glycolate biosynthesis; glycolate from 2-phosphoglycolate: step 1/1. Its function is as follows. Specifically catalyzes the dephosphorylation of 2-phosphoglycolate. Is involved in the dissimilation of the intracellular 2-phosphoglycolate formed during the DNA repair of 3'-phosphoglycolate ends, a major class of DNA lesions induced by oxidative stress. This is Phosphoglycolate phosphatase from Shigella dysenteriae serotype 1 (strain Sd197).